Here is a 22-residue protein sequence, read N- to C-terminus: QGYGFNEPEQTRNQGGSSWEAP.

Residues Gln1–Pro22 form a disordered region. The span at Thr11–Pro22 shows a compositional bias: polar residues.

Belongs to the AKAP95 family.

It localises to the nucleus matrix. Functionally, probable transcriptional activator which may play a role in neuronal differentiation. Able to bind DNA and activate expression in vitro. The polypeptide is Zinc finger protein 326 (Znf326) (Rattus norvegicus (Rat)).